Here is a 172-residue protein sequence, read N- to C-terminus: MTDKKENKMREVKIAKLVINCCVGESGDKLTKAAKVLKDLSGQEPVFSRARYTIRSFGIKRNEKMAVHVTIRGDKARDILTRGLKVKEMELRKKNFSNTGNFGFGIQEHIDLGMKYDPSTGIFGMDFYVVLERPGTRVARRRRATSRVGNNQMISKEECINWFKTEFEGNVY.

It belongs to the universal ribosomal protein uL5 family. In terms of assembly, component of the large ribosomal subunit.

It is found in the nucleus. The protein resides in the cytoplasm. In terms of biological role, component of the ribosome, a large ribonucleoprotein complex responsible for the synthesis of proteins in the cell. The small ribosomal subunit (SSU) binds messenger RNAs (mRNAs) and translates the encoded message by selecting cognate aminoacyl-transfer RNA (tRNA) molecules. The large subunit (LSU) contains the ribosomal catalytic site termed the peptidyl transferase center (PTC), which catalyzes the formation of peptide bonds, thereby polymerizing the amino acids delivered by tRNAs into a polypeptide chain. The nascent polypeptides leave the ribosome through a tunnel in the LSU and interact with protein factors that function in enzymatic processing, targeting, and the membrane insertion of nascent chains at the exit of the ribosomal tunnel. This Tetrahymena thermophila protein is Large ribosomal subunit protein uL5 (RPL11).